A 280-amino-acid chain; its full sequence is Diaminopimelate epimerase (280 aa).

Residues N14 and N67 each contribute to the substrate site. The Proton donor role is filled by C76. Residues 77 to 78, N193, and 210 to 211 contribute to the substrate site; these read GN and ER. Catalysis depends on C220, which acts as the Proton acceptor. 221–222 is a binding site for substrate; that stretch reads GT.

This sequence belongs to the diaminopimelate epimerase family. As to quaternary structure, homodimer.

It localises to the cytoplasm. The enzyme catalyses (2S,6S)-2,6-diaminopimelate = meso-2,6-diaminopimelate. It functions in the pathway amino-acid biosynthesis; L-lysine biosynthesis via DAP pathway; DL-2,6-diaminopimelate from LL-2,6-diaminopimelate: step 1/1. In terms of biological role, catalyzes the stereoinversion of LL-2,6-diaminopimelate (L,L-DAP) to meso-diaminopimelate (meso-DAP), a precursor of L-lysine. The sequence is that of Diaminopimelate epimerase from Methanocella arvoryzae (strain DSM 22066 / NBRC 105507 / MRE50).